The following is a 186-amino-acid chain: Ribosome-recycling factor (186 aa).

The protein belongs to the RRF family.

It is found in the cytoplasm. Its function is as follows. Responsible for the release of ribosomes from messenger RNA at the termination of protein biosynthesis. May increase the efficiency of translation by recycling ribosomes from one round of translation to another. The polypeptide is Ribosome-recycling factor (Ralstonia pickettii (strain 12J)).